The primary structure comprises 158 residues: Putative tyrosine-protein phosphatase OCA1 (158 aa).

One can recognise a Tyrosine-protein phosphatase domain in the interval 7 to 158; that stretch reads NYGMVEENFY…DEELVFGASY (152 aa). Cys99 serves as the catalytic Phosphocysteine intermediate.

This sequence belongs to the protein-tyrosine phosphatase family.

It localises to the cytoplasm. The catalysed reaction is O-phospho-L-tyrosyl-[protein] + H2O = L-tyrosyl-[protein] + phosphate. In terms of biological role, putative tyrosine-protein phosphatase required for protection against superoxide stress. This chain is Putative tyrosine-protein phosphatase OCA1 (OCA1), found in Mycosarcoma maydis (Corn smut fungus).